Consider the following 351-residue polypeptide: Histidinol-phosphate aminotransferase (351 aa).

An N6-(pyridoxal phosphate)lysine modification is found at K213.

Belongs to the class-II pyridoxal-phosphate-dependent aminotransferase family. Histidinol-phosphate aminotransferase subfamily. As to quaternary structure, homodimer. It depends on pyridoxal 5'-phosphate as a cofactor.

The catalysed reaction is L-histidinol phosphate + 2-oxoglutarate = 3-(imidazol-4-yl)-2-oxopropyl phosphate + L-glutamate. Its pathway is amino-acid biosynthesis; L-histidine biosynthesis; L-histidine from 5-phospho-alpha-D-ribose 1-diphosphate: step 7/9. The polypeptide is Histidinol-phosphate aminotransferase (Thermoanaerobacter pseudethanolicus (strain ATCC 33223 / 39E) (Clostridium thermohydrosulfuricum)).